We begin with the raw amino-acid sequence, 513 residues long: Probable DNA ligase (513 aa).

Residue Glu215 coordinates ATP. Lys217 serves as the catalytic N6-AMP-lysine intermediate. Arg222, Arg237, Glu266, Phe306, Arg378, and Lys384 together coordinate ATP.

This sequence belongs to the ATP-dependent DNA ligase family. Mg(2+) is required as a cofactor.

It carries out the reaction ATP + (deoxyribonucleotide)n-3'-hydroxyl + 5'-phospho-(deoxyribonucleotide)m = (deoxyribonucleotide)n+m + AMP + diphosphate.. Its function is as follows. DNA ligase that seals nicks in double-stranded DNA during DNA replication, DNA recombination and DNA repair. The chain is Probable DNA ligase from Mycobacterium marinum (strain ATCC BAA-535 / M).